A 477-amino-acid chain; its full sequence is Trigger factor (477 aa).

The PPIase FKBP-type domain occupies 163–248 (ENLVIFDYKA…ITEVKKSEEV (86 aa)). The span at 408–461 (KAKPSKKEISKEEAEKILKEHQKQDHNHEHDHNHDHDHPEEKKASKSTKIEKKP) shows a compositional bias: basic and acidic residues. Residues 408-477 (KAKPSKKEIS…KPSTKKVSKK (70 aa)) are disordered.

The protein belongs to the FKBP-type PPIase family. Tig subfamily.

It localises to the cytoplasm. The enzyme catalyses [protein]-peptidylproline (omega=180) = [protein]-peptidylproline (omega=0). Involved in protein export. Acts as a chaperone by maintaining the newly synthesized protein in an open conformation. Functions as a peptidyl-prolyl cis-trans isomerase. This is Trigger factor from Pelagibacter ubique (strain HTCC1062).